A 646-amino-acid chain; its full sequence is Elongation factor 4 (646 aa).

The tr-type G domain maps to 42–227 (AQIRNFCIIA…EVVRRVPHPQ (186 aa)). GTP is bound by residues 54–59 (DHGKST) and 174–177 (NKID).

This sequence belongs to the TRAFAC class translation factor GTPase superfamily. Classic translation factor GTPase family. LepA subfamily.

It is found in the cell membrane. The catalysed reaction is GTP + H2O = GDP + phosphate + H(+). Its function is as follows. Required for accurate and efficient protein synthesis under certain stress conditions. May act as a fidelity factor of the translation reaction, by catalyzing a one-codon backward translocation of tRNAs on improperly translocated ribosomes. Back-translocation proceeds from a post-translocation (POST) complex to a pre-translocation (PRE) complex, thus giving elongation factor G a second chance to translocate the tRNAs correctly. Binds to ribosomes in a GTP-dependent manner. This Mycobacterium leprae (strain Br4923) protein is Elongation factor 4.